A 582-amino-acid polypeptide reads, in one-letter code: Aspartate--tRNA(Asp/Asn) ligase (582 aa).

L-aspartate is bound at residue Glu-177. Residues 201–204 (QLFK) form an aspartate region. L-aspartate is bound at residue Arg-223. ATP contacts are provided by residues 223–225 (RDE) and Gln-232. His-447 is a binding site for L-aspartate. Glu-481 contributes to the ATP binding site. Arg-488 serves as a coordination point for L-aspartate. An ATP-binding site is contributed by 533-536 (GLDR).

The protein belongs to the class-II aminoacyl-tRNA synthetase family. Type 1 subfamily. As to quaternary structure, homodimer.

Its subcellular location is the cytoplasm. It carries out the reaction tRNA(Asx) + L-aspartate + ATP = L-aspartyl-tRNA(Asx) + AMP + diphosphate. In terms of biological role, aspartyl-tRNA synthetase with relaxed tRNA specificity since it is able to aspartylate not only its cognate tRNA(Asp) but also tRNA(Asn). Reaction proceeds in two steps: L-aspartate is first activated by ATP to form Asp-AMP and then transferred to the acceptor end of tRNA(Asp/Asn). The sequence is that of Aspartate--tRNA(Asp/Asn) ligase from Chlamydia trachomatis serovar L2 (strain ATCC VR-902B / DSM 19102 / 434/Bu).